Here is a 532-residue protein sequence, read N- to C-terminus: Cytokinin dehydrogenase 8 (532 aa).

A signal peptide spans 1-26; it reads MELKAMYLYAAVLAVLLCSSVNFIQS. The 188-residue stretch at 51 to 238 folds into the FAD-binding PCMH-type domain; it reads VSDAPFAVMR…TRARIPLQLA (188 aa). FAD contacts are provided by Ala87, Gly89, and Gly91. At His92 the chain carries Pros-8alpha-FAD histidine. FAD is bound by residues Ser93, Gln97, Asp162, Thr167, Ser173, Ile177, and Ile228. Asn420 is a glycosylation site (N-linked (GlcNAc...) asparagine). FAD is bound by residues Tyr482 and Gln520.

Belongs to the oxygen-dependent FAD-linked oxidoreductase family. As to quaternary structure, monomer. FAD is required as a cofactor.

Its subcellular location is the secreted. It localises to the extracellular space. The catalysed reaction is N(6)-dimethylallyladenine + A + H2O = 3-methyl-2-butenal + adenine + AH2. In terms of biological role, catalyzes the oxidation of cytokinins, a family of N(6)-substituted adenine derivatives that are plant hormones, where the substituent is an isopentenyl group. In Oryza sativa subsp. indica (Rice), this protein is Cytokinin dehydrogenase 8 (CKX8).